The sequence spans 965 residues: Villin-3 (965 aa).

6 Gelsolin-like repeats span residues 27-79 (ENFE…DEAG), 150-190 (VHLK…QERA), 262-304 (GQVE…EERK), 401-452 (ANSK…EDQE), 533-573 (NKAL…EQQE), and 635-676 (FQVE…KEKQ). 2 stretches are compositionally biased toward low complexity: residues 769 to 780 (AFNSSSGRTSSP) and 808 to 828 (SSPS…ASQR). Disordered stretches follow at residues 769–828 (AFNS…ASQR) and 840–906 (TAEK…GVTF). A compositionally biased stretch (acidic residues) spans 865-879 (EATEEATEAKEEEEV). Ser-880 carries the phosphoserine modification. Positions 900–965 (ETTGVTFTYE…DLLKKKFNLF (66 aa)) constitute an HP domain.

The protein belongs to the villin/gelsolin family. In terms of tissue distribution, expressed in all tissues examined, including root hairs.

The protein localises to the cytoplasm. It is found in the cytoskeleton. In terms of biological role, binds actin and actin filament bundles in a Ca(2+)-insensitive manner, but severs actin filaments in a calcium-dependent manner, regardless of the presence or not of VLN1 (AC O81643). Acts redundantly with VLN2 (AC O81644) to generate thick actin filament bundles, to regulate directional organ growth and in sclerenchyma development. In Arabidopsis thaliana (Mouse-ear cress), this protein is Villin-3.